The following is a 163-amino-acid chain: uncharacterized protein (163 aa).

Positions 1-10 (MGVPRAREGR) are enriched in basic and acidic residues. Residues 1 to 163 (MGVPRAREGR…WSFTPLRWGS (163 aa)) form a disordered region.

This is an uncharacterized protein from Homo sapiens (Human).